The following is a 424-amino-acid chain: Calreticulin-3 (424 aa).

The first 28 residues, 1–28 (MGLPQNKLSFFCFFFLVSVLTLAPLAFS), serve as a signal peptide directing secretion. Residue asparagine 97 is glycosylated (N-linked (GlcNAc...) asparagine). Cysteine 114 and cysteine 146 are joined by a disulfide. Tyrosine 118, lysine 120, tyrosine 137, and aspartate 144 together coordinate an alpha-D-glucoside. Tandem repeats lie at residues 200–211 (REFGSMYTDWDI), 219–230 (VKNAKKPEDWDD), 236–247 (DPNDVKPEGFDS), 254–265 (DRKAKEPEDWDE), 269–279 (GLWEPPKIPNS), 283–293 (GPWKAKRIKNP), and 297–307 (GKWKNPWIDNP). The segment at 200-265 (REFGSMYTDW…KAKEPEDWDE (66 aa)) is 4 X approximate repeats. Residues 228–237 (WDDREYIDDP) are compositionally biased toward acidic residues. Residues 228-275 (WDDREYIDDPNDVKPEGFDSIPREIPDRKAKEPEDWDEEENGLWEPPK) form a disordered region. Residues 238–260 (NDVKPEGFDSIPREIPDRKAKEP) show a composition bias toward basic and acidic residues. A 3 X approximate repeats region spans residues 269 to 307 (GLWEPPKIPNSAYKGPWKAKRIKNPNYKGKWKNPWIDNP). Glutamate 327 lines the an alpha-D-glucoside pocket. Positions 368–401 (FAEAEKERKAREDEEARIAREEGERRRKERDHRY) are enriched in basic and acidic residues. A disordered region spans residues 368 to 424 (FAEAEKERKAREDEEARIAREEGERRRKERDHRYGDRRRRYKRPNPRDYMDDYHDEL). Basic residues predominate over residues 402–411 (GDRRRRYKRP). Residues 412–424 (NPRDYMDDYHDEL) show a composition bias toward basic and acidic residues. The Prevents secretion from ER motif lies at 421 to 424 (HDEL).

It belongs to the calreticulin family.

The protein resides in the endoplasmic reticulum lumen. In terms of biological role, molecular calcium-binding chaperone promoting folding, oligomeric assembly and quality control in the ER via the calreticulin/calnexin cycle. This lectin may interact transiently with almost all of the monoglucosylated glycoproteins that are synthesized in the ER. Required for elongation factor Tu receptor (EFR) accumulation and for EFR, but not flagellin-sensing 2 (FLS2) signaling. The protein is Calreticulin-3 (CRT3) of Arabidopsis thaliana (Mouse-ear cress).